Here is a 55-residue protein sequence, read N- to C-terminus: Small ribosomal subunit protein eS31 (55 aa).

Zn(2+) is bound by residues C26, C29, C44, and C47.

It belongs to the eukaryotic ribosomal protein eS31 family. In terms of assembly, part of the 30S ribosomal subunit. Requires Zn(2+) as cofactor.

The polypeptide is Small ribosomal subunit protein eS31 (Archaeoglobus fulgidus (strain ATCC 49558 / DSM 4304 / JCM 9628 / NBRC 100126 / VC-16)).